The chain runs to 493 residues: Leucine-rich repeat-containing protein 14 (493 aa).

The LRR 1; degenerate repeat unit spans residues Lys-111–Thr-146. One copy of the LRR 2; degenerate repeat lies at Arg-194–Asp-218. The stretch at Ala-219–Arg-246 is one LRR 3; degenerate repeat. One copy of the LRR 4; degenerate repeat lies at Phe-247–Arg-282. LRR repeat units lie at residues Phe-283–Leu-307, Gln-308–Lys-339, Lys-340–Leu-360, Ala-364–Arg-391, and Cys-392–Asp-416.

Belongs to the PRAME family. LRRC14 subfamily. As to quaternary structure, interacts with IKBKB; disrupts IKBKB-IKBKG interaction preventing I-kappa-B-kinase (IKK) core complex formation and leading to a decrease of IKBKB phosphorylation and NF-kappaB activation. Interacts with CHUK.

The protein resides in the cytoplasm. Its function is as follows. Negatively regulates Toll-like receptor-mediated NF-kappa-B signaling by disrupting IKK core complex formation through interaction with IKBKB. The chain is Leucine-rich repeat-containing protein 14 from Mus musculus (Mouse).